A 239-amino-acid polypeptide reads, in one-letter code: ATP-dependent dethiobiotin synthetase BioD (239 aa).

22-27 (GIGKTV) is an ATP binding site. Mg(2+) is bound at residue threonine 26. Lysine 47 is an active-site residue. Threonine 51 contacts substrate. ATP-binding positions include aspartate 59, 124–127 (EGVG), and 184–185 (NR). Positions 59 and 124 each coordinate Mg(2+).

It belongs to the dethiobiotin synthetase family. Homodimer. Mg(2+) is required as a cofactor.

The protein localises to the cytoplasm. The enzyme catalyses (7R,8S)-7,8-diammoniononanoate + CO2 + ATP = (4R,5S)-dethiobiotin + ADP + phosphate + 3 H(+). It functions in the pathway cofactor biosynthesis; biotin biosynthesis; biotin from 7,8-diaminononanoate: step 1/2. Its function is as follows. Catalyzes a mechanistically unusual reaction, the ATP-dependent insertion of CO2 between the N7 and N8 nitrogen atoms of 7,8-diaminopelargonic acid (DAPA, also called 7,8-diammoniononanoate) to form a ureido ring. The polypeptide is ATP-dependent dethiobiotin synthetase BioD (Chlorobaculum tepidum (strain ATCC 49652 / DSM 12025 / NBRC 103806 / TLS) (Chlorobium tepidum)).